We begin with the raw amino-acid sequence, 145 residues long: 3-hydroxyacyl-[acyl-carrier-protein] dehydratase FabZ (145 aa).

His49 is an active-site residue.

The protein belongs to the thioester dehydratase family. FabZ subfamily.

Its subcellular location is the cytoplasm. It catalyses the reaction a (3R)-hydroxyacyl-[ACP] = a (2E)-enoyl-[ACP] + H2O. Its function is as follows. Involved in unsaturated fatty acids biosynthesis. Catalyzes the dehydration of short chain beta-hydroxyacyl-ACPs and long chain saturated and unsaturated beta-hydroxyacyl-ACPs. The protein is 3-hydroxyacyl-[acyl-carrier-protein] dehydratase FabZ of Rickettsia felis (strain ATCC VR-1525 / URRWXCal2) (Rickettsia azadi).